We begin with the raw amino-acid sequence, 787 residues long: Protocadherin beta-15 (787 aa).

An N-terminal signal peptide occupies residues 1-26; the sequence is MEPAGERFPEQRQVLILLLLLEVTLA. The Extracellular segment spans residues 27–690; it reads GWEPRRYSVM…AQADSLTVYL (664 aa). Cadherin domains are found at residues 35 to 133, 138 to 242, 247 to 347, 352 to 451, and 456 to 561; these read VMEE…SPEF, MTLK…APEF, YEVQ…FPEL, LTSP…APAF, and YTLF…SPFV. Asn-418 is a glycosylation site (N-linked (GlcNAc...) asparagine). N-linked (GlcNAc...) asparagine glycosylation occurs at Asn-567. The region spanning 568–671 is the Cadherin 6 domain; it reads GSAPCTELVP…LVDGFSQPYL (104 aa). The helical transmembrane segment at 691–711 threads the bilayer; that stretch reads VVALASVSSLFLFSVFLFVAV. Residues 712–787 are Cytoplasmic-facing; the sequence is RLCRRSRAAS…DSRRKSEFLE (76 aa).

The protein localises to the cell membrane. In terms of biological role, potential calcium-dependent cell-adhesion protein. May be involved in the establishment and maintenance of specific neuronal connections in the brain. The polypeptide is Protocadherin beta-15 (PCDHB15) (Homo sapiens (Human)).